The following is a 717-amino-acid chain: MSYPGLTIINKTITLPDGREIQIETGKLAKQADGSAVVKLGNAMILATVVSAKEAKPGVDFMPLSVDYQEKFASNGKIPGGFLKRESRLSDYEILISRLVDRAMRPLFPEDFHADTQVAITLISADADVLPDALACLAAQAAMSVSDIPFNGPVSEVRVISLNGEFIINPKPAQIEKAELELIVAASYDNVIMVEGEMSEVSEELMLNAIKVAHDAIRTQCIVLKELESAAGKTEKRTYSHEVNDWDLKKKINDAVYQQVYEVAKLGNANKNTRAEGFKAVKKAYIESLPADHTEDLTLIGKYYHDVEKDAVRNLILDERKRLDGRSLEQIRPIWSEVGYLPSAHGSAIFTRGETQSLTTVTFGTRLDEQMIDSAMFSGNNKLMLHYNFPGFSTGEVKPNRGPGRREVGHGNLAYRAIKKVMPPEIENPYTIRIVSDILESNGSSSMATVCAGTLALMDAGIKIKAPVSGIAMGLITDTKTGRWAVLSDILGDEDHLGDMDFKVTGTEKGITACQMDIKVDGLSYDILSQALQQANRGRLHILSEMKKTLATPREDLKPHAPRMIMIQIPKELIGAVIGPGGKIIQEIQKTSGATVNIEEKDNAGWVSIFSKDKTALDSALSQIKGIVTLPEVGEVYEGKVKSITAFGAFVEFLPGKDGLLHISEIKWERLDTMEGVLEVGETVKVKLVEVDKKTGKYRLSRKVLIPKPEQQATSNS.

Positions 495 and 501 each coordinate Mg(2+). Positions 562–624 constitute a KH domain; sequence PRMIMIQIPK…TALDSALSQI (63 aa). In terms of domain architecture, S1 motif spans 634–703; it reads GEVYEGKVKS…KTGKYRLSRK (70 aa).

The protein belongs to the polyribonucleotide nucleotidyltransferase family. The cofactor is Mg(2+).

The protein resides in the cytoplasm. It catalyses the reaction RNA(n+1) + phosphate = RNA(n) + a ribonucleoside 5'-diphosphate. In terms of biological role, involved in mRNA degradation. Catalyzes the phosphorolysis of single-stranded polyribonucleotides processively in the 3'- to 5'-direction. This Cytophaga hutchinsonii (strain ATCC 33406 / DSM 1761 / CIP 103989 / NBRC 15051 / NCIMB 9469 / D465) protein is Polyribonucleotide nucleotidyltransferase.